Here is a 230-residue protein sequence, read N- to C-terminus: Ion-translocating oxidoreductase complex subunit E (230 aa).

The Cytoplasmic segment spans residues 1 to 17 (MSENRTLMLNGMWNNNP). Helical transmembrane passes span 18–38 (ALVQ…VTNA) and 39–59 (LGLG…VSLV). The Cytoplasmic portion of the chain corresponds to 60 to 68 (RDYVPKEVR). The chain crosses the membrane as a helical span at residues 69–89 (IPVFVMIIASLVTCVQLLMNA). The Periplasmic portion of the chain corresponds to 90–92 (YAY). The chain crosses the membrane as a helical span at residues 93 to 113 (GLYLSLGIFIPLIVTNCIIIG). Residues 114 to 123 (RAEAFASKND) are Cytoplasmic-facing. The chain crosses the membrane as a helical span at residues 124-144 (VLPAALDGFWMGLGMTSVLVV). Residues 145 to 181 (LGSLREIIGNGTLFDGADLLLGEWAKVLRIEVFHFDS) are Periplasmic-facing. The helical transmembrane segment at 182–202 (AFLLALLPPGAFIGVGFLIAA) threads the bilayer. At 203–230 (KSVIDKQIAARQPKQQKQAIERARVTNV) the chain is on the cytoplasmic side.

It belongs to the NqrDE/RnfAE family. In terms of assembly, the complex is composed of six subunits: RnfA, RnfB, RnfC, RnfD, RnfE and RnfG.

It localises to the cell inner membrane. Its function is as follows. Part of a membrane-bound complex that couples electron transfer with translocation of ions across the membrane. The sequence is that of Ion-translocating oxidoreductase complex subunit E from Vibrio cholerae serotype O1 (strain ATCC 39541 / Classical Ogawa 395 / O395).